A 602-amino-acid chain; its full sequence is Elongation factor 4 (602 aa).

A tr-type G domain is found at 2 to 184 (NHIRNFSIIA…AVVAKVPPPK (183 aa)). GTP is bound by residues 14–19 (DHGKST) and 131–134 (NKMD).

The protein belongs to the TRAFAC class translation factor GTPase superfamily. Classic translation factor GTPase family. LepA subfamily.

It is found in the cell inner membrane. It catalyses the reaction GTP + H2O = GDP + phosphate + H(+). Functionally, required for accurate and efficient protein synthesis under certain stress conditions. May act as a fidelity factor of the translation reaction, by catalyzing a one-codon backward translocation of tRNAs on improperly translocated ribosomes. Back-translocation proceeds from a post-translocation (POST) complex to a pre-translocation (PRE) complex, thus giving elongation factor G a second chance to translocate the tRNAs correctly. Binds to ribosomes in a GTP-dependent manner. The chain is Elongation factor 4 from Delftia acidovorans (strain DSM 14801 / SPH-1).